A 194-amino-acid polypeptide reads, in one-letter code: Pyridoxal 5'-phosphate synthase subunit PdxT (194 aa).

54 to 56 (GES) serves as a coordination point for L-glutamine. The active-site Nucleophile is Cys-83. L-glutamine contacts are provided by residues Arg-110 and 139 to 140 (IR). Residues His-175 and Glu-177 each act as charge relay system in the active site.

Belongs to the glutaminase PdxT/SNO family. In the presence of PdxS, forms a dodecamer of heterodimers. Only shows activity in the heterodimer.

It catalyses the reaction aldehydo-D-ribose 5-phosphate + D-glyceraldehyde 3-phosphate + L-glutamine = pyridoxal 5'-phosphate + L-glutamate + phosphate + 3 H2O + H(+). It carries out the reaction L-glutamine + H2O = L-glutamate + NH4(+). It participates in cofactor biosynthesis; pyridoxal 5'-phosphate biosynthesis. Its function is as follows. Catalyzes the hydrolysis of glutamine to glutamate and ammonia as part of the biosynthesis of pyridoxal 5'-phosphate. The resulting ammonia molecule is channeled to the active site of PdxS. This is Pyridoxal 5'-phosphate synthase subunit PdxT from Methanoregula boonei (strain DSM 21154 / JCM 14090 / 6A8).